The primary structure comprises 164 residues: Urease subunit beta (164 aa).

Composition is skewed to polar residues over residues 1 to 10 and 20 to 30; these read MSTKTNSTKA and TNRGTKSSAGY. A disordered region spans residues 1–30; the sequence is MSTKTNSTKATSEKTDSLKTNRGTKSSAGY.

The protein belongs to the urease beta subunit family. In terms of assembly, heterotrimer of UreA (gamma), UreB (beta) and UreC (alpha) subunits. Three heterotrimers associate to form the active enzyme.

The protein resides in the cytoplasm. It carries out the reaction urea + 2 H2O + H(+) = hydrogencarbonate + 2 NH4(+). It functions in the pathway nitrogen metabolism; urea degradation; CO(2) and NH(3) from urea (urease route): step 1/1. Functionally, expression of the urease operon increases the likelihood of bacterial survival by contributing to acid resistance in vitro and in vivo in BALB/c mice. Y.enterocolitica enters the body via an oral path and must survive the acidic stomach before being able to colonize the intestinal mucosa. This Yersinia enterocolitica protein is Urease subunit beta.